Reading from the N-terminus, the 141-residue chain is Nucleoside triphosphatase NudI (141 aa).

Residues 1–141 (MRQRTIVCPL…RHTLALKGLL (141 aa)) enclose the Nudix hydrolase domain. Residues 38–59 (GGVEPGERIEEALRREVREELG) carry the Nudix box motif.

The protein belongs to the Nudix hydrolase family. NudI subfamily. Monomer. Requires Mg(2+) as cofactor.

It catalyses the reaction a ribonucleoside 5'-triphosphate + H2O = a ribonucleoside 5'-phosphate + diphosphate + H(+). The enzyme catalyses a 2'-deoxyribonucleoside 5'-triphosphate + H2O = a 2'-deoxyribonucleoside 5'-phosphate + diphosphate + H(+). The catalysed reaction is dUTP + H2O = dUMP + diphosphate + H(+). It carries out the reaction dTTP + H2O = dTMP + diphosphate + H(+). It catalyses the reaction dCTP + H2O = dCMP + diphosphate + H(+). Its function is as follows. Catalyzes the hydrolysis of nucleoside triphosphates, with a preference for pyrimidine deoxynucleoside triphosphates (dUTP, dTTP and dCTP). In Salmonella agona (strain SL483), this protein is Nucleoside triphosphatase NudI.